The sequence spans 303 residues: Succinate--CoA ligase [ADP-forming] subunit alpha (303 aa).

CoA is bound by residues 20-23 (TGSE), Lys46, and 108-110 (ITE). Tyr173 contributes to the substrate binding site. Catalysis depends on His259, which acts as the Tele-phosphohistidine intermediate.

It belongs to the succinate/malate CoA ligase alpha subunit family. In terms of assembly, heterotetramer of two alpha and two beta subunits.

The catalysed reaction is succinate + ATP + CoA = succinyl-CoA + ADP + phosphate. It catalyses the reaction GTP + succinate + CoA = succinyl-CoA + GDP + phosphate. Its pathway is carbohydrate metabolism; tricarboxylic acid cycle; succinate from succinyl-CoA (ligase route): step 1/1. Succinyl-CoA synthetase functions in the citric acid cycle (TCA), coupling the hydrolysis of succinyl-CoA to the synthesis of either ATP or GTP and thus represents the only step of substrate-level phosphorylation in the TCA. The alpha subunit of the enzyme binds the substrates coenzyme A and phosphate, while succinate binding and nucleotide specificity is provided by the beta subunit. The chain is Succinate--CoA ligase [ADP-forming] subunit alpha from Mycobacterium tuberculosis (strain CDC 1551 / Oshkosh).